The following is a 119-amino-acid chain: Ribonuclease P protein component (119 aa).

Belongs to the RnpA family. Consists of a catalytic RNA component (M1 or rnpB) and a protein subunit.

It carries out the reaction Endonucleolytic cleavage of RNA, removing 5'-extranucleotides from tRNA precursor.. Its function is as follows. RNaseP catalyzes the removal of the 5'-leader sequence from pre-tRNA to produce the mature 5'-terminus. It can also cleave other RNA substrates such as 4.5S RNA. The protein component plays an auxiliary but essential role in vivo by binding to the 5'-leader sequence and broadening the substrate specificity of the ribozyme. This is Ribonuclease P protein component from Borreliella burgdorferi (strain ATCC 35210 / DSM 4680 / CIP 102532 / B31) (Borrelia burgdorferi).